Here is a 2771-residue protein sequence, read N- to C-terminus: Kinesin-like protein KIN-12D (2771 aa).

2 stretches are compositionally biased toward basic and acidic residues: residues 1 to 13 (MSKE…RDSD) and 40 to 54 (KNPK…DRTP). Disordered stretches follow at residues 1–73 (MSKE…TPDK) and 117–139 (YSET…GSCY). Positions 118-131 (SETNSTQNTPTKSV) are enriched in polar residues. The Kinesin motor domain maps to 193–530 (NVQILIRVRP…LKFAQRAKLI (338 aa)). 274–281 (GQTGSGKT) contacts ATP. Microtubules-binding stretches follow at residues 400–404 (SSRSH), 431–437 (VDLAGSE), and 479–483 (HIPYR). Coiled-coil stretches lie at residues 1033-1110 (AATA…NEME), 1267-1331 (ELKQ…MKEK), 1410-1505 (IILL…YVEN), 2108-2390 (ELED…EQVK), and 2512-2677 (RERD…LAQE). A compositionally biased stretch (basic residues) spans 2727 to 2736 (LKGKAKSRRS). The disordered stretch occupies residues 2727 to 2771 (LKGKAKSRRSRNPERKMPSMPSPRRSWSQSPRSMSQVPFFSSLDR). A compositionally biased stretch (low complexity) spans 2744-2762 (PSMPSPRRSWSQSPRSMSQ).

Belongs to the TRAFAC class myosin-kinesin ATPase superfamily. Kinesin family. KIN-12 subfamily. In terms of tissue distribution, expressed in tissues enriched in dividing cells, such as root meristems, root primordia, and leaf primordia/young leaves.

The protein resides in the cytoplasm. It is found in the cytoskeleton. It localises to the phragmoplast. In terms of biological role, involved in the spatial control of cytokinesis by a proper phragmoplast guidance. This chain is Kinesin-like protein KIN-12D, found in Arabidopsis thaliana (Mouse-ear cress).